The chain runs to 355 residues: Protein-glutamate methylesterase/protein-glutamine glutaminase (355 aa).

The Response regulatory domain occupies 7-123 (AAVVVDDSQF…SVGIKQQQDE (117 aa)). Aspartate 57 is subject to 4-aspartylphosphate. The interval 139–159 (TEAAAERTTSTATSTTTSRSA) is disordered. Residues 161-355 (EYVDKPTLVI…DGVLDTIMRE (195 aa)) form the CheB-type methylesterase domain. Residues serine 173, histidine 200, and aspartate 297 contribute to the active site.

Belongs to the CheB family. In terms of processing, phosphorylated by CheA. Phosphorylation of the N-terminal regulatory domain activates the methylesterase activity.

Its subcellular location is the cytoplasm. The enzyme catalyses [protein]-L-glutamate 5-O-methyl ester + H2O = L-glutamyl-[protein] + methanol + H(+). It catalyses the reaction L-glutaminyl-[protein] + H2O = L-glutamyl-[protein] + NH4(+). Involved in chemotaxis. Part of a chemotaxis signal transduction system that modulates chemotaxis in response to various stimuli. Catalyzes the demethylation of specific methylglutamate residues introduced into the chemoreceptors (methyl-accepting chemotaxis proteins or MCP) by CheR. Also mediates the irreversible deamidation of specific glutamine residues to glutamic acid. This Natronomonas pharaonis (strain ATCC 35678 / DSM 2160 / CIP 103997 / JCM 8858 / NBRC 14720 / NCIMB 2260 / Gabara) (Halobacterium pharaonis) protein is Protein-glutamate methylesterase/protein-glutamine glutaminase.